A 355-amino-acid chain; its full sequence is UDP-3-O-acylglucosamine N-acyltransferase (355 aa).

Residue histidine 258 is the Proton acceptor of the active site.

The protein belongs to the transferase hexapeptide repeat family. LpxD subfamily. In terms of assembly, homotrimer.

It carries out the reaction a UDP-3-O-[(3R)-3-hydroxyacyl]-alpha-D-glucosamine + a (3R)-hydroxyacyl-[ACP] = a UDP-2-N,3-O-bis[(3R)-3-hydroxyacyl]-alpha-D-glucosamine + holo-[ACP] + H(+). It functions in the pathway bacterial outer membrane biogenesis; LPS lipid A biosynthesis. In terms of biological role, catalyzes the N-acylation of UDP-3-O-acylglucosamine using 3-hydroxyacyl-ACP as the acyl donor. Is involved in the biosynthesis of lipid A, a phosphorylated glycolipid that anchors the lipopolysaccharide to the outer membrane of the cell. In Bradyrhizobium diazoefficiens (strain JCM 10833 / BCRC 13528 / IAM 13628 / NBRC 14792 / USDA 110), this protein is UDP-3-O-acylglucosamine N-acyltransferase.